Consider the following 1136-residue polypeptide: Probable RNA-dependent RNA polymerase 2 (1136 aa).

Residues 965-989 (SGDSGALSSSSAQPSPTYDPDLEVP) form a disordered region. A compositionally biased stretch (low complexity) spans 967 to 980 (DSGALSSSSAQPSP).

Belongs to the RdRP family.

It catalyses the reaction RNA(n) + a ribonucleoside 5'-triphosphate = RNA(n+1) + diphosphate. Functionally, probably involved in the RNA silencing pathway and required for the generation of small interfering RNAs (siRNAs). The sequence is that of Probable RNA-dependent RNA polymerase 2 (RDR2) from Oryza sativa subsp. japonica (Rice).